The sequence spans 303 residues: Phytochrome-associated serine/threonine-protein phosphatase (303 aa).

Zn(2+)-binding residues include D50, H52, D78, and N110. H111 functions as the Proton donor in the catalytic mechanism. Zn(2+) contacts are provided by H160 and H234.

Belongs to the PPP phosphatase family. PP-6 (PP-V) subfamily. As to quaternary structure, interacts with PHYA and PHYB, mostly when they are phosphorylated and in Pfr forms. The cofactor is Zn(2+). In terms of tissue distribution, mostly expressed in flowers and stems.

The protein localises to the cytoplasm. The enzyme catalyses O-phospho-L-seryl-[protein] + H2O = L-seryl-[protein] + phosphate. It catalyses the reaction O-phospho-L-threonyl-[protein] + H2O = L-threonyl-[protein] + phosphate. Functionally, catalytic subunit of protein phosphatase 6 (PP6). Dephosphorylates phosphorylated phytochromes, with a preference toward Pfr forms. Plays a major role in the photoperiodic control of flowering time in long days by modulating phytochrome signals in flowering time control. The protein is Phytochrome-associated serine/threonine-protein phosphatase of Pisum sativum (Garden pea).